A 105-amino-acid chain; its full sequence is Large ribosomal subunit protein uL23 (105 aa).

It belongs to the universal ribosomal protein uL23 family. In terms of assembly, part of the 50S ribosomal subunit. Contacts protein L29, and trigger factor when it is bound to the ribosome.

Its function is as follows. One of the early assembly proteins it binds 23S rRNA. One of the proteins that surrounds the polypeptide exit tunnel on the outside of the ribosome. Forms the main docking site for trigger factor binding to the ribosome. In Chloroherpeton thalassium (strain ATCC 35110 / GB-78), this protein is Large ribosomal subunit protein uL23.